The primary structure comprises 308 residues: Methionyl-tRNA formyltransferase (308 aa).

110–113 (SLLP) is a (6S)-5,6,7,8-tetrahydrofolate binding site.

It belongs to the Fmt family.

It carries out the reaction L-methionyl-tRNA(fMet) + (6R)-10-formyltetrahydrofolate = N-formyl-L-methionyl-tRNA(fMet) + (6S)-5,6,7,8-tetrahydrofolate + H(+). Attaches a formyl group to the free amino group of methionyl-tRNA(fMet). The formyl group appears to play a dual role in the initiator identity of N-formylmethionyl-tRNA by promoting its recognition by IF2 and preventing the misappropriation of this tRNA by the elongation apparatus. In Neisseria meningitidis serogroup C (strain 053442), this protein is Methionyl-tRNA formyltransferase.